Consider the following 185-residue polypeptide: Translation initiation factor IF-3 (185 aa).

The protein belongs to the IF-3 family. Monomer.

It localises to the cytoplasm. IF-3 binds to the 30S ribosomal subunit and shifts the equilibrium between 70S ribosomes and their 50S and 30S subunits in favor of the free subunits, thus enhancing the availability of 30S subunits on which protein synthesis initiation begins. In Coxiella burnetii (strain RSA 493 / Nine Mile phase I), this protein is Translation initiation factor IF-3.